The sequence spans 565 residues: Thiol:disulfide interchange protein DsbD (565 aa).

An N-terminal signal peptide occupies residues 1–19 (MAQRIFTLILLLCSTSVFA). Cystine bridges form between Cys-122-Cys-128 and Cys-182-Cys-304. The next 7 helical transmembrane spans lie at 163 to 183 (LPFS…TPCV), 208 to 228 (LLTF…GLVV), 243 to 263 (YVLI…FGLF), 296 to 316 (IAGL…LLYI), 323 to 343 (WLGG…LMLI), 357 to 377 (WMEQ…VFLL), and 384 to 404 (VWGL…AFIT). The Thioredoxin domain occupies 434 to 565 (WAFGATHTAQ…FSAHLRDRQP (132 aa)). A disulfide bond links Cys-480 and Cys-483.

Belongs to the thioredoxin family. DsbD subfamily.

It is found in the cell inner membrane. It catalyses the reaction [protein]-dithiol + NAD(+) = [protein]-disulfide + NADH + H(+). The enzyme catalyses [protein]-dithiol + NADP(+) = [protein]-disulfide + NADPH + H(+). In terms of biological role, required to facilitate the formation of correct disulfide bonds in some periplasmic proteins and for the assembly of the periplasmic c-type cytochromes. Acts by transferring electrons from cytoplasmic thioredoxin to the periplasm. This transfer involves a cascade of disulfide bond formation and reduction steps. The polypeptide is Thiol:disulfide interchange protein DsbD (Shigella boydii serotype 4 (strain Sb227)).